The following is a 279-amino-acid chain: 30 kDa ribonucleoprotein, chloroplastic (279 aa).

Residues 87-165 form the RRM 1 domain; it reads LKIFVGNLLF…RALRVNSGPP (79 aa). Residues 156–187 form a disordered region; the sequence is RALRVNSGPPPEKRENSSFRENSSFRGGSRGG. The tract at residues 166–193 is linker (Gly-rich); that stretch reads PEKRENSSFRENSSFRGGSRGGGSFDSS. An RRM 2 domain is found at 194–272; sequence NRVYVGNLAW…RAIRVSPAEA (79 aa).

Expressed at high levels in the leaves and seedlings, and lower levels are seen in the stems and roots.

The protein resides in the plastid. It is found in the chloroplast. In terms of biological role, could be involved in splicing and/or processing of chloroplast RNA's. The protein is 30 kDa ribonucleoprotein, chloroplastic of Nicotiana plumbaginifolia (Leadwort-leaved tobacco).